We begin with the raw amino-acid sequence, 357 residues long: Alanine racemase (357 aa).

The Proton acceptor; specific for D-alanine role is filled by lysine 35. Position 35 is an N6-(pyridoxal phosphate)lysine (lysine 35). A substrate-binding site is contributed by arginine 128. The active-site Proton acceptor; specific for L-alanine is the tyrosine 254. Methionine 302 lines the substrate pocket.

Belongs to the alanine racemase family. The cofactor is pyridoxal 5'-phosphate.

The catalysed reaction is L-alanine = D-alanine. It functions in the pathway amino-acid biosynthesis; D-alanine biosynthesis; D-alanine from L-alanine: step 1/1. Catalyzes the interconversion of L-alanine and D-alanine. May also act on other amino acids. The polypeptide is Alanine racemase (alr) (Marinobacter nauticus (strain ATCC 700491 / DSM 11845 / VT8) (Marinobacter aquaeolei)).